Consider the following 494-residue polypeptide: MIPVIALVGRPNVGKSTLFNRLTHTRDALVADFPGLTRDRKYGRAEVEGHEFIVIDTGGIDGTEDGVETKMAGQSLLAIEEADIVLFMVDARAGLMPADQGIAQHLRSREKATFLVANKTDGIDPDTATADFYSLGLGEVHAIAASHGRGVTQLIEDVMAPYMDAEEPEAELTDEEANAAYWAAQEADEDEIPEDEEDDFDPLSLPIKLAIVGRPNVGKSTLTNRILGEDRVVVYDMPGTTRDSIYIPMTRDEREYILIDTAGVRKRGKITEAVEKFSVIKTLQAIEDSNVVLLVIDARDGISDQDLSLLGFILNSGRSLVIAVNKWDGMSEEARAQVKDMLDLRLGFVDFARIHFISALHGSGVGNLFESIQEAYDCSTKRVGTSLLTRIMQMAEEDHQPPLVRGRRVKLKYAHAGGYNPPIVVIHGNQVTDLSDSYKRYLMNYFRRSLKVMGTPIRIQFKEGENPFAGKRNTLTPNQMRKRKRLMSHLKKGK.

2 consecutive EngA-type G domains span residues 3–166 and 207–380; these read PVIA…MDAE and IKLA…DCST. GTP-binding positions include 9-16, 56-60, 118-121, 213-220, 260-264, and 325-328; these read GRPNVGKS, DTGGI, NKTD, DTAGV, and NKWD. The 85-residue stretch at 381 to 465 folds into the KH-like domain; the sequence is KRVGTSLLTR…PIRIQFKEGE (85 aa).

This sequence belongs to the TRAFAC class TrmE-Era-EngA-EngB-Septin-like GTPase superfamily. EngA (Der) GTPase family. In terms of assembly, associates with the 50S ribosomal subunit.

Functionally, GTPase that plays an essential role in the late steps of ribosome biogenesis. The sequence is that of GTPase Der from Yersinia enterocolitica serotype O:8 / biotype 1B (strain NCTC 13174 / 8081).